The chain runs to 426 residues: D-tagatose-1,6-bisphosphate aldolase subunit KbaZ (426 aa).

Belongs to the GatZ/KbaZ family. KbaZ subfamily. In terms of assembly, forms a complex with KbaY.

The protein operates within carbohydrate metabolism; D-tagatose 6-phosphate degradation; D-glyceraldehyde 3-phosphate and glycerone phosphate from D-tagatose 6-phosphate: step 2/2. In terms of biological role, component of the tagatose-1,6-bisphosphate aldolase KbaYZ that is required for full activity and stability of the Y subunit. Could have a chaperone-like function for the proper and stable folding of KbaY. When expressed alone, KbaZ does not show any aldolase activity. This chain is D-tagatose-1,6-bisphosphate aldolase subunit KbaZ, found in Shigella flexneri.